The chain runs to 973 residues: Translation initiation factor IF-2 (973 aa).

The tract at residues 52 to 388 (PDQEEVKPAA…QAQKPAQPLE (337 aa)) is disordered. Composition is skewed to basic and acidic residues over residues 83–120 (ESRK…DHYK), 128–148 (VPSR…DKAR), 157–172 (QGAR…ERTR), 186–202 (VQQE…RPPF), 210–246 (PQHE…DKGA), 272–288 (RAGE…ETKP), 314–333 (LLDD…EKQK), and 343–360 (KSRE…ERLR). Positions 374 to 386 (AKPQEQAQKPAQP) are enriched in low complexity. The region spanning 472 to 641 (DRPCVVTVMG…LLVAEMSELK (170 aa)) is the tr-type G domain. The segment at 481–488 (GHVDHGKT) is G1. Position 481–488 (481–488 (GHVDHGKT)) interacts with GTP. Positions 506-510 (GITQH) are G2. The interval 527 to 530 (DTPG) is G3. GTP contacts are provided by residues 527 to 531 (DTPGH) and 581 to 584 (NKID). The G4 stretch occupies residues 581 to 584 (NKID). A G5 region spans residues 617 to 619 (SAL).

This sequence belongs to the TRAFAC class translation factor GTPase superfamily. Classic translation factor GTPase family. IF-2 subfamily.

It is found in the cytoplasm. In terms of biological role, one of the essential components for the initiation of protein synthesis. Protects formylmethionyl-tRNA from spontaneous hydrolysis and promotes its binding to the 30S ribosomal subunits. Also involved in the hydrolysis of GTP during the formation of the 70S ribosomal complex. The protein is Translation initiation factor IF-2 of Pelotomaculum thermopropionicum (strain DSM 13744 / JCM 10971 / SI).